The primary structure comprises 895 residues: Iron-regulated surface determinant protein H (895 aa).

A signal peptide spans 1-40 (MNKHHPKLRSFYSIRKSTLGVASVIVSTLFLITSQHQAQA). The interval 42–85 (ENTNTSDKISENQNNNATTTQPPKDTNQTQPATQPANTAKNYPA) is disordered. Residues 53–62 (NQNNNATTTQ) are compositionally biased toward low complexity. The segment covering 63–81 (PPKDTNQTQPATQPANTAK) has biased composition (polar residues). An NEAT 1 domain is found at 105 to 232 (DIGPREQVNF…IYNDPSLVKS (128 aa)). The tract at residues 241–324 (NDQSSSVASN…NQSDVNQQYP (84 aa)) is disordered. The span at 243–276 (QSSSVASNQTNTNTSNQNTSTINNANNQPQATTN) shows a compositional bias: low complexity. Residues 277 to 323 (MSQPAQPKSSTNADQASSQPAHETNSNGNTNDKTNESSNQSDVNQQY) are compositionally biased toward polar residues. 2 NEAT domains span residues 345–471 (TADN…DYVD) and 543–660 (QLTD…TKDD). Disordered regions lie at residues 657–720 (TKDD…DNNI), 751–782 (QIAKDTDRNVDKDADNSVGMSSNVDTDKDSNK), and 841–868 (KTKEKAGTPSKENKLSQSKMLPKTGETT). Composition is skewed to polar residues over residues 663–677 (SQNNTSEPLNVQTGQ) and 687–697 (AENSSTATNPK). Basic and acidic residues-rich tracts occupy residues 698-720 (DASDKADVIEPESDVVKDADNNI), 751-765 (QIAKDTDRNVDKDAD), and 841-854 (KTKEKAGTPSKENK). Positions 855-868 (LSQSKMLPKTGETT) are enriched in polar residues. Positions 861 to 865 (LPKTG) match the LPXTG sorting signal motif. Residue Thr864 is modified to Pentaglycyl murein peptidoglycan amidated threonine. Positions 865–895 (GETTSSQSWWGLYALLGMLALFIPKFRKESK) are cleaved as a propeptide — removed by sortase.

It belongs to the IsdH family.

The protein localises to the secreted. It is found in the cell wall. Functionally, binds human plasma haptoglobin-hemoglobin complexes, haptoglobin and hemoglobin. Binds haptoglobin-hemoglobin complexes with significantly higher affinity than haptoglobin alone. The sequence is that of Iron-regulated surface determinant protein H (isdH) from Staphylococcus aureus (strain COL).